A 42-amino-acid chain; its full sequence is Photosystem I reaction center subunit IX (42 aa).

Residues 7–27 form a helical membrane-spanning segment; that stretch reads YLSVAPVLATLWFGSLAGLLI.

This sequence belongs to the PsaJ family.

The protein localises to the plastid. The protein resides in the chloroplast thylakoid membrane. Functionally, may help in the organization of the PsaE and PsaF subunits. This Chloranthus spicatus (Chulantree) protein is Photosystem I reaction center subunit IX.